We begin with the raw amino-acid sequence, 759 residues long: Protein MEI2-like 3 (759 aa).

RRM domains are found at residues 166 to 239 and 251 to 324; these read RTLF…FSIP and GTLV…HSRP.

Functionally, probable RNA-binding protein that plays a role in meiosis and vegetative growth. This is Protein MEI2-like 3 (ML3) from Arabidopsis thaliana (Mouse-ear cress).